The primary structure comprises 58 residues: Large ribosomal subunit protein eL24 (58 aa).

Zn(2+) contacts are provided by cysteine 6, cysteine 9, cysteine 32, and cysteine 36. The C4-type zinc finger occupies 6 to 36; it reads CSFCGAEIPPGYGIMYVRNDGTIQRYCSRKC.

The protein belongs to the eukaryotic ribosomal protein eL24 family. As to quaternary structure, part of the 50S ribosomal subunit. Forms a cluster with proteins L3 and L14. Requires Zn(2+) as cofactor.

Functionally, binds to the 23S rRNA. The chain is Large ribosomal subunit protein eL24 from Pyrobaculum neutrophilum (strain DSM 2338 / JCM 9278 / NBRC 100436 / V24Sta) (Thermoproteus neutrophilus).